The sequence spans 194 residues: Sigma factor AlgU negative regulatory protein (194 aa).

The chain crosses the membrane as a helical span at residues 89-105 (LAVAASVTLAVLAGVRL).

The protein belongs to the RseA family.

It is found in the cell membrane. Functionally, negative regulator of the sigma factor AlgU. Plays a role in the differentiation of P.aeruginosa into the alginate-producing form. Inactivation of mucA causes a switch from the non-mucoid to mucoid state resulting in constitutive expression of alginate biosynthetic genes. The protein is Sigma factor AlgU negative regulatory protein (mucA) of Pseudomonas aeruginosa (strain ATCC 15692 / DSM 22644 / CIP 104116 / JCM 14847 / LMG 12228 / 1C / PRS 101 / PAO1).